The chain runs to 502 residues: Carbon catabolite-derepressing protein kinase (502 aa).

The 256-residue stretch at 14-269 (YYLGKILGVG…IGEIRKHSWF (256 aa)) folds into the Protein kinase domain. Residues 20–28 (LGVGTFAKV) and Lys43 each bind ATP. Asp140 serves as the catalytic Proton acceptor. Residue Thr173 is modified to Phosphothreonine; by autocatalysis. Residues 290-330 (MIDEDTLRDVVKLGYDKDHVCESLCNRLQNEETVAYYLLLD) form the UBA domain. Residues 453 to 501 (NSRLPAVIKFEIQLYKTKDDKYLLDMQRVTGPQLLFLEFCAAFLTNLRV) enclose the KA1 domain.

This sequence belongs to the protein kinase superfamily. CAMK Ser/Thr protein kinase family. SNF1 subfamily.

The catalysed reaction is L-seryl-[protein] + ATP = O-phospho-L-seryl-[protein] + ADP + H(+). It catalyses the reaction L-threonyl-[protein] + ATP = O-phospho-L-threonyl-[protein] + ADP + H(+). In terms of biological role, essential for release from glucose repression. The polypeptide is Carbon catabolite-derepressing protein kinase (RKIN1) (Secale cereale (Rye)).